The sequence spans 137 residues: Proofreading thioesterase EntH (137 aa).

The active-site Nucleophile or proton acceptor is the glutamate 63.

This sequence belongs to the thioesterase PaaI family. Homotetramer. Dimer of dimers. Interacts specifically with the aryl carrier protein (ArCP) domain of EntB.

The protein localises to the cytoplasm. It functions in the pathway siderophore biosynthesis; enterobactin biosynthesis. Required for optimal enterobactin synthesis. Acts as a proofreading enzyme that prevents EntB misacylation by hydrolyzing the thioester bound existing between EntB and wrongly charged molecules. This is Proofreading thioesterase EntH from Escherichia coli O6:H1 (strain CFT073 / ATCC 700928 / UPEC).